Reading from the N-terminus, the 411-residue chain is Tyrosine--tRNA ligase (411 aa).

L-tyrosine is bound at residue Tyr-34. Residues 39–48 carry the 'HIGH' region motif; that stretch reads CTATSLHIGS. L-tyrosine is bound by residues Tyr-171 and Gln-175. The 'KMSKS' region motif lies at 231 to 235; sequence KMGKT. Residue Lys-234 participates in ATP binding. The S4 RNA-binding domain maps to 345–411; that stretch reads ISAYELFHEA…GKKRHILVRV (67 aa).

This sequence belongs to the class-I aminoacyl-tRNA synthetase family. TyrS type 1 subfamily. As to quaternary structure, homodimer.

It localises to the cytoplasm. It carries out the reaction tRNA(Tyr) + L-tyrosine + ATP = L-tyrosyl-tRNA(Tyr) + AMP + diphosphate + H(+). Its function is as follows. Catalyzes the attachment of tyrosine to tRNA(Tyr) in a two-step reaction: tyrosine is first activated by ATP to form Tyr-AMP and then transferred to the acceptor end of tRNA(Tyr). The sequence is that of Tyrosine--tRNA ligase from Rickettsia massiliae (strain Mtu5).